A 77-amino-acid chain; its full sequence is Large ribosomal subunit protein bL28 (77 aa).

Residues 1-25 (MARVCQVTGKAPMSGNNVSHANNKT) are disordered.

Belongs to the bacterial ribosomal protein bL28 family.

This Paraburkholderia xenovorans (strain LB400) protein is Large ribosomal subunit protein bL28.